We begin with the raw amino-acid sequence, 508 residues long: Lysine--tRNA ligase (508 aa).

Mg(2+) is bound by residues glutamate 403 and glutamate 410.

The protein belongs to the class-II aminoacyl-tRNA synthetase family. In terms of assembly, homodimer. Mg(2+) is required as a cofactor.

Its subcellular location is the cytoplasm. It catalyses the reaction tRNA(Lys) + L-lysine + ATP = L-lysyl-tRNA(Lys) + AMP + diphosphate. This Methanoculleus marisnigri (strain ATCC 35101 / DSM 1498 / JR1) protein is Lysine--tRNA ligase.